The following is a 265-amino-acid chain: UPF0354 protein GTNG_2723 (265 aa).

Belongs to the UPF0354 family.

This Geobacillus thermodenitrificans (strain NG80-2) protein is UPF0354 protein GTNG_2723.